Reading from the N-terminus, the 334-residue chain is Probable tRNA pseudouridine synthase B (334 aa).

Asp82 functions as the Nucleophile in the catalytic mechanism. Residues 250–325 form the PUA domain; sequence LPKIWIKDSA…IAVDVEKVFM (76 aa).

The protein belongs to the pseudouridine synthase TruB family. Type 2 subfamily.

It catalyses the reaction uridine(55) in tRNA = pseudouridine(55) in tRNA. Its function is as follows. Could be responsible for synthesis of pseudouridine from uracil-55 in the psi GC loop of transfer RNAs. In Pyrococcus horikoshii (strain ATCC 700860 / DSM 12428 / JCM 9974 / NBRC 100139 / OT-3), this protein is Probable tRNA pseudouridine synthase B.